The following is a 553-amino-acid chain: Phosphoglucomutase (553 aa).

A disordered region spans residues 1–25 (MQATIKRYPTSPISGQTLGTSGLRK). Over residues 11–20 (SPISGQTLGT) the composition is skewed to polar residues. Substrate is bound by residues threonine 20, arginine 24, 117-118 (SH), and lysine 131. The active-site Phosphoserine intermediate is the serine 117. Residue serine 117 participates in Mg(2+) binding. Aspartate 289, aspartate 291, and aspartate 293 together coordinate Mg(2+). Substrate is bound by residues 293–294 (DR), threonine 352, 371–373 (EES), lysine 384, and arginine 509.

Belongs to the phosphohexose mutase family. Mg(2+) is required as a cofactor.

The protein resides in the cytoplasm. The catalysed reaction is alpha-D-glucose 1-phosphate = alpha-D-glucose 6-phosphate. Functionally, catalyzes the reversible conversion of glucose 1-phosphate into glucose 6-phosphate. This enzyme participates in both the breakdown and synthesis of glucose. This is Phosphoglucomutase from Entamoeba histolytica (strain ATCC 30459 / HM-1:IMSS / ABRM).